Reading from the N-terminus, the 118-residue chain is NADH-quinone oxidoreductase subunit A (118 aa).

Transmembrane regions (helical) follow at residues Phe-5–Met-25, Phe-61–Ala-81, and Phe-90–Trp-110.

It belongs to the complex I subunit 3 family. NDH-1 is composed of 14 different subunits. Subunits NuoA, H, J, K, L, M, N constitute the membrane sector of the complex.

It localises to the cell membrane. It carries out the reaction a quinone + NADH + 5 H(+)(in) = a quinol + NAD(+) + 4 H(+)(out). Its function is as follows. NDH-1 shuttles electrons from NADH, via FMN and iron-sulfur (Fe-S) centers, to quinones in the respiratory chain. The immediate electron acceptor for the enzyme in this species is believed to be a menaquinone. Couples the redox reaction to proton translocation (for every two electrons transferred, four hydrogen ions are translocated across the cytoplasmic membrane), and thus conserves the redox energy in a proton gradient. The protein is NADH-quinone oxidoreductase subunit A of Desulfitobacterium hafniense (strain Y51).